We begin with the raw amino-acid sequence, 92 residues long: Elongation factor 1-beta (92 aa).

This sequence belongs to the EF-1-beta/EF-1-delta family.

Its function is as follows. Promotes the exchange of GDP for GTP in EF-1-alpha/GDP, thus allowing the regeneration of EF-1-alpha/GTP that could then be used to form the ternary complex EF-1-alpha/GTP/AAtRNA. The chain is Elongation factor 1-beta from Pyrobaculum neutrophilum (strain DSM 2338 / JCM 9278 / NBRC 100436 / V24Sta) (Thermoproteus neutrophilus).